A 181-amino-acid polypeptide reads, in one-letter code: UPF0397 protein STER_0346 (181 aa).

The next 5 helical transmembrane spans lie at 11 to 31 (ATGI…IPIF), 45 to 65 (LFSV…GHAL), 72 to 92 (GNIS…IGLF), 109 to 129 (IWFN…VTPI), and 147 to 167 (FVAG…LLAI).

Belongs to the UPF0397 family.

The protein localises to the cell membrane. In Streptococcus thermophilus (strain ATCC BAA-491 / LMD-9), this protein is UPF0397 protein STER_0346.